The sequence spans 591 residues: Serine/threonine-protein kinase Nek2 (591 aa).

A Protein kinase domain is found at 4–258 (YEVLEQIGKG…AAQLLKHPQL (255 aa)). ATP contacts are provided by residues 10 to 18 (IGKGAFGSA) and Lys-33. The Proton acceptor role is filled by Asp-129. 3 disordered regions span residues 309–331 (LGNE…SSTR), 387–408 (EPPK…TTPN), and 500–534 (RTDG…DTSS). 2 stretches are compositionally biased toward polar residues: residues 391–408 (TSYN…TTPN) and 504–534 (DNGS…DTSS).

This sequence belongs to the protein kinase superfamily. NEK Ser/Thr protein kinase family. NIMA subfamily.

The catalysed reaction is L-seryl-[protein] + ATP = O-phospho-L-seryl-[protein] + ADP + H(+). It catalyses the reaction L-threonyl-[protein] + ATP = O-phospho-L-threonyl-[protein] + ADP + H(+). In terms of biological role, may be involved in plant development processes. The chain is Serine/threonine-protein kinase Nek2 (NEK2) from Oryza sativa subsp. indica (Rice).